Reading from the N-terminus, the 3110-residue chain is Huntingtin (3110 aa).

Residues 1-58 (MKAFESLKSFQQQQQQQQPPPQPPPPPPPPPQPPQPPPQGQPPPPPPLPGPAEEPLHR) are disordered. K2 is modified (N6-acetyllysine). The segment covering 18-52 (QPPPQPPPPPPPPPQPPQPPPQGQPPPPPPLPGPA) has biased composition (pro residues). 2 positions are modified to N6-acetyllysine: K146 and K204. HEAT repeat units lie at residues 174-211 (PYLV…SFGN) and 216-253 (NEIK…HSRR). Residue K313 is modified to N6-acetyllysine. S387, S389, and S402 each carry phosphoserine. An N6-acetyllysine modification is found at K412. The interaction with ZDHHC17 stretch occupies residues 462-473 (GHDIITEQPRSQ). The interval 487–549 (DLTSAATDGD…PDSAVTPSDS (63 aa)) is disordered. Positions 521–549 (DGTQASSPISDSSQTTTEGPDSAVTPSDS) are enriched in polar residues. G522 carries the N-myristoyl glycine lipid modification. Residues S611 and S614 each carry the phosphoserine modification. 2 HEAT repeats span residues 773-810 (FSLV…SLCS) and 873-911 (KLQE…KLFY). The interval 1137 to 1195 (KAALPSLTNPPSLSPIRRKGKEKEPGEQTSTPMSPKKGGEASTASRQSDTSGPVTASKS) is disordered. A compositionally biased stretch (low complexity) spans 1140–1151 (LPSLTNPPSLSP). Phosphoserine; by CDK5 is present on residues S1150 and S1170. The segment covering 1178–1195 (STASRQSDTSGPVTASKS) has biased composition (polar residues). The stretch at 1395–1432 (LFEPLVIKALKQYTTTTSVQLQKQVLDLLAQLVQLRVN) is one HEAT 5 repeat. S1845 is modified (phosphoserine). Residues 2363-2372 (IVVSLARLPL) carry the Nuclear export signal motif. The tract at residues 2601–2628 (EEEWDEEEEEEADAPAPTSPPVSPVNSR) is disordered. The span at 2602–2613 (EEWDEEEEEEAD) shows a compositional bias: acidic residues.

It belongs to the huntingtin family. As to quaternary structure, interacts with PFN1. Interacts through its N-terminus with PRPF40A. Interacts with PQBP1. Interacts with SETD2. Interacts with SH3GLB1. Interacts with SYVN. Interacts with TPR; the interaction is inhibited by forms of Huntingtin with expanded polyglutamine stretch. Interacts with ZDHHC13 (via ANK repeats). Interacts with ZDHHC17 (via ANK repeats). Interacts with F8A1/F8A2/F8A3. Found in a complex with F8A1/F8A2/F8A3, HTT and RAB5A; mediates the recruitment of HTT by RAB5A. Post-translationally, phosphorylation at Ser-1150 and Ser-1170 by CDK5 in response to DNA damage in nuclei of neurons protects neurons against polyglutamine expansion as well as DNA damage mediated toxicity. In terms of processing, cleaved by caspases downstream of the polyglutamine stretch. Myristoylated at Gly-522, following proteolytic cleavage at Asp-521. In terms of tissue distribution, expressed to a high degree in all the regions of the brain of adults and in meiotic cells of the testis. In addition, very low levels are detected in various non-neuronal tissues (heart, muscle, liver, lung and kidney).

It is found in the cytoplasm. The protein localises to the nucleus. The protein resides in the cytoplasmic vesicle. It localises to the autophagosome. Functionally, may play a role in microtubule-mediated transport or vesicle function. Promotes the formation of autophagic vesicles. This is Huntingtin (Htt) from Rattus norvegicus (Rat).